The chain runs to 560 residues: DNA ligase B (560 aa).

The N6-AMP-lysine intermediate role is filled by K124.

This sequence belongs to the NAD-dependent DNA ligase family. LigB subfamily.

The catalysed reaction is NAD(+) + (deoxyribonucleotide)n-3'-hydroxyl + 5'-phospho-(deoxyribonucleotide)m = (deoxyribonucleotide)n+m + AMP + beta-nicotinamide D-nucleotide.. In terms of biological role, catalyzes the formation of phosphodiester linkages between 5'-phosphoryl and 3'-hydroxyl groups in double-stranded DNA using NAD as a coenzyme and as the energy source for the reaction. This is DNA ligase B from Escherichia coli (strain K12 / DH10B).